An 82-amino-acid chain; its full sequence is Small ribosomal subunit protein bS16 (82 aa).

The protein belongs to the bacterial ribosomal protein bS16 family.

This is Small ribosomal subunit protein bS16 from Edwardsiella ictaluri (strain 93-146).